A 318-amino-acid chain; its full sequence is NADH-ubiquinone oxidoreductase chain 1 (318 aa).

8 consecutive transmembrane segments (helical) span residues 2-22 (FLIN…FLTL), 69-89 (FLFT…WAPL), 102-122 (LLFI…SGWA), 146-166 (MTTI…TAFA), 171-191 (HLWL…STLA), 222-242 (LFFM…VILF), 253-273 (EIST…FLWV), and 294-314 (LPLT…LACI).

The protein belongs to the complex I subunit 1 family.

Its subcellular location is the mitochondrion inner membrane. It catalyses the reaction a ubiquinone + NADH + 5 H(+)(in) = a ubiquinol + NAD(+) + 4 H(+)(out). Core subunit of the mitochondrial membrane respiratory chain NADH dehydrogenase (Complex I) that is believed to belong to the minimal assembly required for catalysis. Complex I functions in the transfer of electrons from NADH to the respiratory chain. The immediate electron acceptor for the enzyme is believed to be ubiquinone. The sequence is that of NADH-ubiquinone oxidoreductase chain 1 (MT-ND1) from Mammuthus primigenius (Siberian woolly mammoth).